The sequence spans 322 residues: Aspartate carbamoyltransferase catalytic subunit (322 aa).

Residues arginine 65 and threonine 66 each coordinate carbamoyl phosphate. Lysine 93 provides a ligand contact to L-aspartate. Carbamoyl phosphate contacts are provided by arginine 115, histidine 143, and glutamine 146. Residues arginine 176 and arginine 230 each contribute to the L-aspartate site. Residues glycine 271 and proline 272 each contribute to the carbamoyl phosphate site.

The protein belongs to the aspartate/ornithine carbamoyltransferase superfamily. ATCase family. Heterododecamer (2C3:3R2) of six catalytic PyrB chains organized as two trimers (C3), and six regulatory PyrI chains organized as three dimers (R2).

It carries out the reaction carbamoyl phosphate + L-aspartate = N-carbamoyl-L-aspartate + phosphate + H(+). Its pathway is pyrimidine metabolism; UMP biosynthesis via de novo pathway; (S)-dihydroorotate from bicarbonate: step 2/3. Its function is as follows. Catalyzes the condensation of carbamoyl phosphate and aspartate to form carbamoyl aspartate and inorganic phosphate, the committed step in the de novo pyrimidine nucleotide biosynthesis pathway. In Brucella canis (strain ATCC 23365 / NCTC 10854 / RM-666), this protein is Aspartate carbamoyltransferase catalytic subunit.